The following is a 403-amino-acid chain: DNA replication and repair protein RecF (403 aa).

30–37 (GSNGLGKT) is an ATP binding site.

The protein belongs to the RecF family.

It is found in the cytoplasm. Its function is as follows. The RecF protein is involved in DNA metabolism; it is required for DNA replication and normal SOS inducibility. RecF binds preferentially to single-stranded, linear DNA. It also seems to bind ATP. The polypeptide is DNA replication and repair protein RecF (Bifidobacterium adolescentis (strain ATCC 15703 / DSM 20083 / NCTC 11814 / E194a)).